We begin with the raw amino-acid sequence, 549 residues long: MDSQQDRLAKQVLIQKSFESKRLFLTILRFAIPTFFFALFSAAYVFVDQIMVIKFVPHGPLNPDSIFTDQALIEEFKASAFYKGGDIPNHTELTASQLVKTVLNISQPIVVILNAITIFVPLGTGVIFSKTIGKGDEKKIKDAWNTGLVSTTLFALVTQIIVLAIAKEWLQFNLDKVDEQHHVQVADQFQHFFNEKAVAIGSEYVYILIGFNIIPMLSRLFFYLGQSEGRQLFIAIVPPLSNLLNVLFVFLLVRFSTLGVVGSAVAAILVYFITFMAYVVYLISLNKRGLTYLSLRDFSFKRVSFNLFLVISMVGLASFFRNGSLSILNTFYESFLVNLTKTLTDQSDTFYLVLLTGPIAIANLTSAAIFGVLQGVRTVVSYKFGQGQLADIKRINVYTLLVCLVFAALLYLILAVGLGKEILVHLFDTSAATLMLANQFSLIVQAQVFFVAIGATSQQYFQNNNRVLYSWIVSLMQGVIVFVPLLFIFQAITLQTKNIEIFIWLLTANAALAGLINVLIGQVHIHFFMDKYFAQKHKSRIVQFIERYS.

A run of 12 helical transmembrane segments spans residues 27-47 (ILRFAIPTFFFALFSAAYVFV), 108-128 (PIVVILNAITIFVPLGTGVIF), 146-166 (TGLVSTTLFALVTQIIVLAIA), 197-217 (AVAIGSEYVYILIGFNIIPML), 233-253 (FIAIVPPLSNLLNVLFVFLLV), 265-285 (VAAILVYFITFMAYVVYLISL), 308-328 (FLVISMVGLASFFRNGSLSIL), 352-372 (LVLLTGPIAIANLTSAAIFGV), 399-419 (TLLVCLVFAALLYLILAVGLG), 434-454 (LMLANQFSLIVQAQVFFVAIG), 472-492 (IVSLMQGVIVFVPLLFIFQAI), and 501-521 (IFIWLLTANAALAGLINVLIG).

The protein resides in the cell membrane. This is an uncharacterized protein from Mycoplasma pneumoniae (strain ATCC 29342 / M129 / Subtype 1) (Mycoplasmoides pneumoniae).